The sequence spans 326 residues: tRNA-modifying protein YgfZ (326 aa).

Folate is bound by residues tryptophan 27 and tryptophan 189.

It belongs to the tRNA-modifying YgfZ family.

The protein localises to the cytoplasm. Functionally, folate-binding protein involved in regulating the level of ATP-DnaA and in the modification of some tRNAs. It is probably a key factor in regulatory networks that act via tRNA modification, such as initiation of chromosomal replication. This is tRNA-modifying protein YgfZ from Escherichia fergusonii (strain ATCC 35469 / DSM 13698 / CCUG 18766 / IAM 14443 / JCM 21226 / LMG 7866 / NBRC 102419 / NCTC 12128 / CDC 0568-73).